The primary structure comprises 634 residues: Chaperone protein HtpG (634 aa).

The interval 1-343 (MTEAENRVTL…SDSLPLNVSR (343 aa)) is a; substrate-binding. Residues 344 to 560 (EILQENKQLE…SYGMSRTMER (217 aa)) are b. The tract at residues 561 to 634 (IMKSAGQNIP…KLNGLLQSLL (74 aa)) is c.

The protein belongs to the heat shock protein 90 family. In terms of assembly, homodimer.

The protein resides in the cytoplasm. In terms of biological role, molecular chaperone. Has ATPase activity. This Methylococcus capsulatus (strain ATCC 33009 / NCIMB 11132 / Bath) protein is Chaperone protein HtpG.